The chain runs to 491 residues: Aspartyl/glutamyl-tRNA(Asn/Gln) amidotransferase subunit B (491 aa).

Belongs to the GatB/GatE family. GatB subfamily. As to quaternary structure, heterotrimer of A, B and C subunits.

It catalyses the reaction L-glutamyl-tRNA(Gln) + L-glutamine + ATP + H2O = L-glutaminyl-tRNA(Gln) + L-glutamate + ADP + phosphate + H(+). The catalysed reaction is L-aspartyl-tRNA(Asn) + L-glutamine + ATP + H2O = L-asparaginyl-tRNA(Asn) + L-glutamate + ADP + phosphate + 2 H(+). In terms of biological role, allows the formation of correctly charged Asn-tRNA(Asn) or Gln-tRNA(Gln) through the transamidation of misacylated Asp-tRNA(Asn) or Glu-tRNA(Gln) in organisms which lack either or both of asparaginyl-tRNA or glutaminyl-tRNA synthetases. The reaction takes place in the presence of glutamine and ATP through an activated phospho-Asp-tRNA(Asn) or phospho-Glu-tRNA(Gln). The protein is Aspartyl/glutamyl-tRNA(Asn/Gln) amidotransferase subunit B of Nostoc sp. (strain PCC 7120 / SAG 25.82 / UTEX 2576).